The following is a 493-amino-acid chain: Ribose import ATP-binding protein RbsA (493 aa).

ABC transporter domains follow at residues 3–239 and 252–493; these read IKMK…VGRE and GRVV…TGGR. 35–42 is a binding site for ATP; it reads GENGAGKS.

It belongs to the ABC transporter superfamily. Ribose importer (TC 3.A.1.2.1) family. In terms of assembly, the complex is composed of an ATP-binding protein (RbsA), two transmembrane proteins (RbsC) and a solute-binding protein (RbsB).

The protein localises to the cell membrane. It carries out the reaction D-ribose(out) + ATP + H2O = D-ribose(in) + ADP + phosphate + H(+). Its function is as follows. Part of the ABC transporter complex RbsABC involved in ribose import. Responsible for energy coupling to the transport system. The protein is Ribose import ATP-binding protein RbsA of Bacillus licheniformis (strain ATCC 14580 / DSM 13 / JCM 2505 / CCUG 7422 / NBRC 12200 / NCIMB 9375 / NCTC 10341 / NRRL NRS-1264 / Gibson 46).